Here is a 384-residue protein sequence, read N- to C-terminus: Secreted LysM effector Blys7 (384 aa).

The N-terminal stretch at 1 to 18 (MQRHLLLGLAGLPALLSA) is a signal peptide. In terms of domain architecture, LysM 1 spans 27 to 71 (FATVAANGETCDSMAATWGLDTATFQSLNPKAKCPEVIGGEQYCV). Positions 81 to 106 (EPTTAPATTSTQTTTTTTTEVTSTTV) are enriched in low complexity. The disordered stretch occupies residues 81-112 (EPTTAPATTSTQTTTTTTTEVTSTTVPGNGIT). The 47-residue stretch at 127-173 (KFYFVNKGDNCADITARYNLDLSDFLEWNPKAGNSCSGLWANAYACV) folds into the LysM 2 domain. The disordered stretch occupies residues 183–206 (KPKPTSTSTKPPTATGNGIPTPLP). Residues 186–195 (PTSTSTKPPT) show a composition bias toward low complexity. Residues 217-263 (KFYLVKPGETCADIASRNGVSLSDFLQWNPHAGNACSGLWANAYACL) enclose the LysM 3 domain.

It belongs to the secreted LysM effector family.

In terms of biological role, might have a role in sequestration of chitin oligosaccharides (breakdown products of fungal cell walls that are released during invasion and act as triggers of host immunity) to dampen host defense. This is Secreted LysM effector Blys7 from Beauveria bassiana (strain ARSEF 2860) (White muscardine disease fungus).